A 344-amino-acid chain; its full sequence is tRNA N6-adenosine threonylcarbamoyltransferase (344 aa).

Fe cation-binding residues include His114 and His118. Substrate-binding positions include 136–140, Asp170, Gly183, Asp187, and Asn278; that span reads LVSGG. Asp306 contributes to the Fe cation binding site. Residues 325-344 are disordered; the sequence is PSPLDVPSDPGLPVMQGQVR.

The protein belongs to the KAE1 / TsaD family. Fe(2+) is required as a cofactor.

It is found in the cytoplasm. The enzyme catalyses L-threonylcarbamoyladenylate + adenosine(37) in tRNA = N(6)-L-threonylcarbamoyladenosine(37) in tRNA + AMP + H(+). Its function is as follows. Required for the formation of a threonylcarbamoyl group on adenosine at position 37 (t(6)A37) in tRNAs that read codons beginning with adenine. Is involved in the transfer of the threonylcarbamoyl moiety of threonylcarbamoyl-AMP (TC-AMP) to the N6 group of A37, together with TsaE and TsaB. TsaD likely plays a direct catalytic role in this reaction. The protein is tRNA N6-adenosine threonylcarbamoyltransferase of Mycobacterium tuberculosis (strain ATCC 25177 / H37Ra).